The sequence spans 29 residues: YCQKWLWTCDSERKCCEDMVCRLWCKKRL.

3 disulfide bridges follow: cysteine 2–cysteine 16, cysteine 9–cysteine 21, and cysteine 15–cysteine 25. Leucine amide is present on leucine 29.

This sequence belongs to the neurotoxin 30 (phrixotoxin) family. As to expression, expressed by the venom gland.

Its subcellular location is the secreted. Inhibits the voltage-gated sodium channels Nav1.1/SCN1A (IC(50)=360 nM), Nav1.2/SCN2A (IC(50)=600 nM), Nav1.3/SCN3A (IC(50)=1280), Nav1.4/SCN4A (IC(50)=330 nM), Nav1.6/SCN8A (IC(50)=1200 nM), Nav1.7/SCN9A (IC(50)=1-40 nM), and voltage-gated potassium channels Kv11.1/KCNH2 (IC(50)=4.8 uM). Induces analgesia in mammals. This analgesia is mediated by a non-opioid receptor related mechanism. The sequence is that of Beta-theraphotoxin-Gr1b from Grammostola rosea (Chilean rose tarantula).